The sequence spans 1372 residues: DNA-directed RNA polymerase subunit beta (1372 aa).

Belongs to the RNA polymerase beta chain family. In terms of assembly, the RNAP catalytic core consists of 2 alpha, 1 beta, 1 beta' and 1 omega subunit. When a sigma factor is associated with the core the holoenzyme is formed, which can initiate transcription.

The enzyme catalyses RNA(n) + a ribonucleoside 5'-triphosphate = RNA(n+1) + diphosphate. DNA-dependent RNA polymerase catalyzes the transcription of DNA into RNA using the four ribonucleoside triphosphates as substrates. The sequence is that of DNA-directed RNA polymerase subunit beta from Psychrobacter sp. (strain PRwf-1).